Reading from the N-terminus, the 373-residue chain is AA9 family lytic polysaccharide monooxygenase A (373 aa).

The signal sequence occupies residues 1–20 (MKSSTFGMLALAAAAKLVSA). H21 contacts Cu(2+). Residues 36-55 (EGNSQSGYIRSPPSNSPITD) are disordered. The cysteines at positions 63 and 183 are disulfide-linked. Residue H102 participates in Cu(2+) binding. 2 residues coordinate O2: H169 and Q178. Y180 contacts Cu(2+). The segment at 234–333 (GASGSSSSSS…NSVPQPSSNA (100 aa)) is disordered. Low complexity-rich tracts occupy residues 235–262 (ASGS…APSS) and 270–323 (PATS…AAPT). Residues 324 to 333 (NSVPQPSSNA) show a composition bias toward polar residues. The CBM1 domain occupies 335-371 (GAVKEWYQCGGLNYSGSTQCEEGLTCKKWNPYYHQCV). A glycan (N-linked (GlcNAc...) asparagine) is linked at N347.

It belongs to the polysaccharide monooxygenase AA9 family. Cu(2+) is required as a cofactor.

Its subcellular location is the secreted. The enzyme catalyses [(1-&gt;4)-beta-D-glucosyl]n+m + reduced acceptor + O2 = 4-dehydro-beta-D-glucosyl-[(1-&gt;4)-beta-D-glucosyl]n-1 + [(1-&gt;4)-beta-D-glucosyl]m + acceptor + H2O.. Lytic polysaccharide monooxygenase (LPMO) that depolymerizes crystalline and amorphous polysaccharides via the oxidation of scissile alpha- or beta-(1-4)-glycosidic bonds, yielding exclusively C4 oxidation products. Catalysis by LPMOs requires the reduction of the active-site copper from Cu(II) to Cu(I) by a reducing agent and H(2)O(2) or O(2) as a cosubstrate. In addition to cellulose, also cleaves the beta-(1!4)-glucan backbone of tamarind xyloglucan, but only next to unsubstituted glucosyl units. This is AA9 family lytic polysaccharide monooxygenase A from Aspergillus tamarii.